A 409-amino-acid polypeptide reads, in one-letter code: Pentatricopeptide repeat-containing protein At1g01970 (409 aa).

PPR repeat units follow at residues 164–198 (NARD…GFLI), 199–233 (DQVT…GEPL), 234–268 (DYRS…EICA), 269–303 (GREV…GITP), 304–338 (DVKL…GIKA), and 339–373 (TDKC…SIML).

The protein belongs to the PPR family. P subfamily.

The protein is Pentatricopeptide repeat-containing protein At1g01970 of Arabidopsis thaliana (Mouse-ear cress).